The primary structure comprises 85 residues: Large ribosomal subunit protein bL27 (85 aa).

The interval methionine 1–leucine 21 is disordered.

The protein belongs to the bacterial ribosomal protein bL27 family.

This is Large ribosomal subunit protein bL27 from Geotalea uraniireducens (strain Rf4) (Geobacter uraniireducens).